A 1081-amino-acid chain; its full sequence is FHF complex subunit HOOK-interacting protein 1A (1081 aa).

Disordered stretches follow at residues 474-496 (SEEQLLPETPCSPSSPSPPPPPA), 544-623 (PETF…DPPK), 658-770 (EKDT…ENEP), and 863-883 (EAGSSPFGVGEDTAFSSRHPV). The segment covering 486-496 (PSSPSPPPPPA) has biased composition (pro residues). A compositionally biased stretch (basic and acidic residues) spans 553–564 (EESRENSGHPEA). Residues 567–576 (PQQSVRTSGQ) are compositionally biased toward polar residues. Acidic residues predominate over residues 680–707 (EPLEDTSEQQEDTSEQLEDTSELQEDTA). Polar residues-rich tracts occupy residues 727–738 (EAQSLPTSNGPL) and 746–762 (ESQPSRESSDLCQNTFS).

Belongs to the FHIP family. May be a component of the FTS/Hook/FHIP complex (FHF complex), composed of AKTIP/FTS, FHIP1B, and one or more members of the Hook family of proteins HOOK1, HOOK2, and HOOK3. May interact directly with AKTIP/FTS.

Its function is as follows. Probable component of the FTS/Hook/FHIP complex (FHF complex). FHF complex promotes the distribution of AP-4 complex to the perinuclear area of the cell. In Mus musculus (Mouse), this protein is FHF complex subunit HOOK-interacting protein 1A.